A 1284-amino-acid polypeptide reads, in one-letter code: Kinesin-like protein KIN-4C (1284 aa).

The region spanning 12 to 364 (SVKVVVNIRP…LKYANRARNI (353 aa)) is the Kinesin motor domain. An ATP-binding site is contributed by 91–98 (GQTGSGKT). Coiled coils occupy residues 407 to 445 (SAAL…EQLA), 561 to 711 (RDHS…QFRS), and 911 to 950 (MCKE…NMLL). Disordered regions lie at residues 1040–1070 (RRQT…SQEK) and 1158–1284 (MSEK…NHLR). Residues 1043–1070 (TVSSHLNPNPGSGTTQKSAKSEMASQEK) show a composition bias toward polar residues. Basic and acidic residues-rich tracts occupy residues 1158 to 1172 (MSEK…RKPL) and 1275 to 1284 (NANEKENHLR).

The protein belongs to the TRAFAC class myosin-kinesin ATPase superfamily. Kinesin family. KIN-4 subfamily. As to quaternary structure, homodimer.

Microtubule-dependent motor protein involved in the control of the oriented deposition of cellulose microfibrils. The sequence is that of Kinesin-like protein KIN-4C from Oryza sativa subsp. japonica (Rice).